Consider the following 233-residue polypeptide: MADS-box transcription factor 20 (233 aa).

In terms of domain architecture, MADS-box spans 1–61; sequence MGRGKVQVRR…GNLFHYASSH (61 aa). In terms of domain architecture, K-box spans 91–184; sequence EGSMSYDHIK…PTKAAAPPAC (94 aa).

As to expression, expressed in developing seeds and seedling shoots.

It localises to the nucleus. In terms of biological role, probable transcription factor. This is MADS-box transcription factor 20 (MADS20) from Oryza sativa subsp. japonica (Rice).